The following is a 177-amino-acid chain: Large ribosomal subunit protein uL6 (177 aa).

This sequence belongs to the universal ribosomal protein uL6 family. In terms of assembly, part of the 50S ribosomal subunit.

Its function is as follows. This protein binds to the 23S rRNA, and is important in its secondary structure. It is located near the subunit interface in the base of the L7/L12 stalk, and near the tRNA binding site of the peptidyltransferase center. The protein is Large ribosomal subunit protein uL6 of Rickettsia canadensis (strain McKiel).